Reading from the N-terminus, the 252-residue chain is H-2 class II histocompatibility antigen, A-F beta chain (252 aa).

The first 16 residues, 1 to 16, serve as a signal peptide directing secretion; sequence AAVVVLMVLSSPGTEG. The interval 17–109 is beta-1; sequence GNSERHFVSQ…VETPTSLRRL (93 aa). Residues 17–213 are Extracellular-facing; the sequence is GNSERHFVSQ…RAQSESARSK (197 aa). 2 cysteine pairs are disulfide-bonded: C31–C93 and C132–C188. N35 carries N-linked (GlcNAc...) asparagine glycosylation. The segment at 110 to 203 is beta-2; the sequence is EQPNVVISLS…SLKSPITVEW (94 aa). One can recognise an Ig-like C1-type domain in the interval 112 to 200; it reads PNVVISLSRT…EHPSLKSPIT (89 aa). Residues 204–213 form a connecting peptide region; it reads RAQSESARSK. The helical transmembrane segment at 214 to 234 threads the bilayer; sequence MLSGIGGCVLGVIFLGLGLFI. Over 235 to 252 the chain is Cytoplasmic; that stretch reads RYRSQKGPRGPPPAGLLQ.

It belongs to the MHC class II family. Post-translationally, ubiquitinated in immature dendritic cells leading to down-regulation of MHC class II.

It localises to the membrane. This is H-2 class II histocompatibility antigen, A-F beta chain (H2-Ab1) from Mus musculus (Mouse).